Consider the following 276-residue polypeptide: 2-dehydro-3-deoxyphosphooctonate aldolase (276 aa).

The protein belongs to the KdsA family.

It localises to the cytoplasm. The enzyme catalyses D-arabinose 5-phosphate + phosphoenolpyruvate + H2O = 3-deoxy-alpha-D-manno-2-octulosonate-8-phosphate + phosphate. It participates in carbohydrate biosynthesis; 3-deoxy-D-manno-octulosonate biosynthesis; 3-deoxy-D-manno-octulosonate from D-ribulose 5-phosphate: step 2/3. It functions in the pathway bacterial outer membrane biogenesis; lipopolysaccharide biosynthesis. This Xylella fastidiosa (strain M23) protein is 2-dehydro-3-deoxyphosphooctonate aldolase.